The chain runs to 929 residues: Isoleucine--tRNA ligase (929 aa).

A 'HIGH' region motif is present at residues 58-68 (PYANGDIHIGH). E563 is a binding site for L-isoleucyl-5'-AMP. The short motif at 605–609 (KMSKS) is the 'KMSKS' region element. An ATP-binding site is contributed by K608. The Zn(2+) site is built by C892, C895, C912, and C915.

This sequence belongs to the class-I aminoacyl-tRNA synthetase family. IleS type 1 subfamily. As to quaternary structure, monomer. Zn(2+) serves as cofactor.

It localises to the cytoplasm. It carries out the reaction tRNA(Ile) + L-isoleucine + ATP = L-isoleucyl-tRNA(Ile) + AMP + diphosphate. Catalyzes the attachment of isoleucine to tRNA(Ile). As IleRS can inadvertently accommodate and process structurally similar amino acids such as valine, to avoid such errors it has two additional distinct tRNA(Ile)-dependent editing activities. One activity is designated as 'pretransfer' editing and involves the hydrolysis of activated Val-AMP. The other activity is designated 'posttransfer' editing and involves deacylation of mischarged Val-tRNA(Ile). The protein is Isoleucine--tRNA ligase of Neisseria gonorrhoeae (strain NCCP11945).